The following is a 235-amino-acid chain: Phosphoribosylaminoimidazole-succinocarboxamide synthase (235 aa).

The protein belongs to the SAICAR synthetase family.

It carries out the reaction 5-amino-1-(5-phospho-D-ribosyl)imidazole-4-carboxylate + L-aspartate + ATP = (2S)-2-[5-amino-1-(5-phospho-beta-D-ribosyl)imidazole-4-carboxamido]succinate + ADP + phosphate + 2 H(+). It functions in the pathway purine metabolism; IMP biosynthesis via de novo pathway; 5-amino-1-(5-phospho-D-ribosyl)imidazole-4-carboxamide from 5-amino-1-(5-phospho-D-ribosyl)imidazole-4-carboxylate: step 1/2. In Clostridium botulinum (strain Alaska E43 / Type E3), this protein is Phosphoribosylaminoimidazole-succinocarboxamide synthase.